The following is a 492-amino-acid chain: Protein nucleotidyltransferase YdiU (492 aa).

Residues glycine 95, glycine 97, arginine 98, lysine 118, aspartate 130, glycine 131, arginine 181, and arginine 188 each coordinate ATP. The Proton acceptor role is filled by aspartate 257. Mg(2+) is bound by residues asparagine 258 and aspartate 267. Aspartate 267 provides a ligand contact to ATP. The segment covering 466 to 475 has biased composition (basic and acidic residues); it reads YDDQPEHAEY. A disordered region spans residues 466–492; the sequence is YDDQPEHAEYRQPPPPSEKPYQTFCGT.

It belongs to the SELO family. Mg(2+) serves as cofactor. The cofactor is Mn(2+).

The enzyme catalyses L-seryl-[protein] + ATP = 3-O-(5'-adenylyl)-L-seryl-[protein] + diphosphate. It carries out the reaction L-threonyl-[protein] + ATP = 3-O-(5'-adenylyl)-L-threonyl-[protein] + diphosphate. It catalyses the reaction L-tyrosyl-[protein] + ATP = O-(5'-adenylyl)-L-tyrosyl-[protein] + diphosphate. The catalysed reaction is L-histidyl-[protein] + UTP = N(tele)-(5'-uridylyl)-L-histidyl-[protein] + diphosphate. The enzyme catalyses L-seryl-[protein] + UTP = O-(5'-uridylyl)-L-seryl-[protein] + diphosphate. It carries out the reaction L-tyrosyl-[protein] + UTP = O-(5'-uridylyl)-L-tyrosyl-[protein] + diphosphate. Functionally, nucleotidyltransferase involved in the post-translational modification of proteins. It can catalyze the addition of adenosine monophosphate (AMP) or uridine monophosphate (UMP) to a protein, resulting in modifications known as AMPylation and UMPylation. The polypeptide is Protein nucleotidyltransferase YdiU (Syntrophotalea carbinolica (strain DSM 2380 / NBRC 103641 / GraBd1) (Pelobacter carbinolicus)).